Reading from the N-terminus, the 361-residue chain is Monodechloroaminopyrrolnitrin synthase PrnB (361 aa).

Position 222 to 225 (222 to 225 (PGAV)) interacts with substrate. A heme-binding site is contributed by histidine 313. Residues tyrosine 321 and serine 332 each contribute to the substrate site.

This sequence belongs to the PrnB family. In terms of assembly, monomer. Heme b serves as cofactor.

The enzyme catalyses 7-chloro-L-tryptophan + AH2 + O2 = monodechloroaminopyrrolnitrin + A + CO2 + 2 H2O. Its pathway is antibiotic biosynthesis. In terms of biological role, involved in the biosynthesis of the antifungal antibiotic pyrrolnitrin. Catalyzes the ring rearrangement and decarboxylation to convert 7-chloro-L-tryptophan (7-CLT) to monodechloroaminopyrrolnitrin (MDA). It can also use 7-chloro-D-tryptophan, but 7-chloro-L-tryptophan is the preferred natural enantiomer. In Pseudomonas fluorescens, this protein is Monodechloroaminopyrrolnitrin synthase PrnB (prnB).